The chain runs to 76 residues: UPF0729 protein C18orf32 homolog (76 aa).

The interval 1–37 (MVCIPCIVIPVLLWVYKKFLEPYIYPLISPFVSRMWP) is necessary for its localzation to the endoplasmic reticulum and lipid droplets. The span at 47–56 (KNKGKVDYKG) shows a compositional bias: basic and acidic residues. The interval 47-76 (KNKGKVDYKGADINGLPTRGPTEMCDKKKD) is disordered.

The protein belongs to the UPF0729 family. Interacts with DERL1 and AMFR. Post-translationally, undergoes ER-associated degradation (ERAD).

Its subcellular location is the endoplasmic reticulum. The protein localises to the lipid droplet. Functionally, may activate the NF-kappa-B signaling pathway. In Bos taurus (Bovine), this protein is UPF0729 protein C18orf32 homolog.